Here is a 347-residue protein sequence, read N- to C-terminus: RNA 3'-terminal phosphate cyclase (347 aa).

ATP contacts are provided by residues glutamine 109 and 290-294 (YLADQ). Histidine 315 (tele-AMP-histidine intermediate) is an active-site residue.

This sequence belongs to the RNA 3'-terminal cyclase family. Type 1 subfamily.

The protein resides in the cytoplasm. It carries out the reaction a 3'-end 3'-phospho-ribonucleotide-RNA + ATP = a 3'-end 2',3'-cyclophospho-ribonucleotide-RNA + AMP + diphosphate. Functionally, catalyzes the conversion of 3'-phosphate to a 2',3'-cyclic phosphodiester at the end of RNA. The mechanism of action of the enzyme occurs in 3 steps: (A) adenylation of the enzyme by ATP; (B) transfer of adenylate to an RNA-N3'P to produce RNA-N3'PP5'A; (C) and attack of the adjacent 2'-hydroxyl on the 3'-phosphorus in the diester linkage to produce the cyclic end product. The biological role of this enzyme is unknown but it is likely to function in some aspects of cellular RNA processing. The protein is RNA 3'-terminal phosphate cyclase of Ralstonia nicotianae (strain ATCC BAA-1114 / GMI1000) (Ralstonia solanacearum).